A 135-amino-acid polypeptide reads, in one-letter code: Small ribosomal subunit protein uS9 (135 aa).

Residues S96–R135 form a disordered region. A compositionally biased stretch (basic and acidic residues) spans A97 to A115. The segment covering K116–R135 has biased composition (basic residues).

The protein belongs to the universal ribosomal protein uS9 family.

The chain is Small ribosomal subunit protein uS9 from Prochlorococcus marinus (strain MIT 9303).